The chain runs to 443 residues: Xaa-Pro dipeptidase (443 aa).

Residues D246, D257, H339, E384, and E423 each contribute to the Mn(2+) site.

Belongs to the peptidase M24B family. Bacterial-type prolidase subfamily. The cofactor is Mn(2+).

It carries out the reaction Xaa-L-Pro dipeptide + H2O = an L-alpha-amino acid + L-proline. Its function is as follows. Splits dipeptides with a prolyl residue in the C-terminal position. In Shigella flexneri serotype 5b (strain 8401), this protein is Xaa-Pro dipeptidase.